The chain runs to 273 residues: 2-dehydro-3-deoxyphosphooctonate aldolase (273 aa).

The protein belongs to the KdsA family.

Its subcellular location is the cytoplasm. The enzyme catalyses D-arabinose 5-phosphate + phosphoenolpyruvate + H2O = 3-deoxy-alpha-D-manno-2-octulosonate-8-phosphate + phosphate. It functions in the pathway carbohydrate biosynthesis; 3-deoxy-D-manno-octulosonate biosynthesis; 3-deoxy-D-manno-octulosonate from D-ribulose 5-phosphate: step 2/3. The protein operates within bacterial outer membrane biogenesis; lipopolysaccharide biosynthesis. The protein is 2-dehydro-3-deoxyphosphooctonate aldolase of Geobacter sp. (strain M21).